The primary structure comprises 341 residues: Phosphoribosylformylglycinamidine cyclo-ligase (341 aa).

Belongs to the AIR synthase family.

It is found in the cytoplasm. It catalyses the reaction 2-formamido-N(1)-(5-O-phospho-beta-D-ribosyl)acetamidine + ATP = 5-amino-1-(5-phospho-beta-D-ribosyl)imidazole + ADP + phosphate + H(+). The protein operates within purine metabolism; IMP biosynthesis via de novo pathway; 5-amino-1-(5-phospho-D-ribosyl)imidazole from N(2)-formyl-N(1)-(5-phospho-D-ribosyl)glycinamide: step 2/2. The polypeptide is Phosphoribosylformylglycinamidine cyclo-ligase (Xanthomonas campestris pv. campestris (strain B100)).